A 475-amino-acid polypeptide reads, in one-letter code: Ribulose bisphosphate carboxylase large chain (475 aa).

Residues 1 to 2 (MS) constitute a propeptide that is removed on maturation. Residue P3 is modified to N-acetylproline. K14 bears the N6,N6,N6-trimethyllysine mark. 2 residues coordinate substrate: N123 and T173. K175 acts as the Proton acceptor in catalysis. K177 provides a ligand contact to substrate. The Mg(2+) site is built by K201, D203, and E204. N6-carboxylysine is present on K201. The active-site Proton acceptor is the H294. Substrate-binding residues include R295, H327, and S379.

It belongs to the RuBisCO large chain family. Type I subfamily. In terms of assembly, heterohexadecamer of 8 large chains and 8 small chains; disulfide-linked. The disulfide link is formed within the large subunit homodimers. Requires Mg(2+) as cofactor. Post-translationally, the disulfide bond which can form in the large chain dimeric partners within the hexadecamer appears to be associated with oxidative stress and protein turnover.

It is found in the plastid. Its subcellular location is the chloroplast. The catalysed reaction is 2 (2R)-3-phosphoglycerate + 2 H(+) = D-ribulose 1,5-bisphosphate + CO2 + H2O. It carries out the reaction D-ribulose 1,5-bisphosphate + O2 = 2-phosphoglycolate + (2R)-3-phosphoglycerate + 2 H(+). In terms of biological role, ruBisCO catalyzes two reactions: the carboxylation of D-ribulose 1,5-bisphosphate, the primary event in carbon dioxide fixation, as well as the oxidative fragmentation of the pentose substrate in the photorespiration process. Both reactions occur simultaneously and in competition at the same active site. The chain is Ribulose bisphosphate carboxylase large chain from Amborella trichopoda.